The chain runs to 1127 residues: MSLTSAYQHKLAEKLTILNDRGQGVLIRMYNIKKTCSDPKSKPPFLLEKSMEPSLKYINKKFPNIDVRNSTQHLGPVHREKAEIIRFLTNYYQSFVDVMEFRDHVYELLNTIDACQCHFDINLNFDFTRSYLDLIVTYTSVILLLSRIEDRRILIGMYNCAHEMLHGHGDPSFARLGQMVLEYDHPLKKLTEEFGPHTKAVSGALLSLHFLFVRRNQGAEQWRSAQLLSLISNPPAMINPANSDTMACEYLSVEVMERWIIIGFLLCHGCLNSNSQCQKLWKLCLQGSLYITLIREDVLQVHKVTEDLFSSLKGYGKRVADIKESKEHVIANSGQFHCQRRQFLRMAVKELETVLADEPGLLGPKALFAFMALSFIRDEVTWLVRHTENVTKTKTPEDYADSSIAELLFLLEGIRSLVRRHIKVIQQYHLQYLARFDALVLSDIIQNLSVCPEEESIIMSSFVSILSSLNLKQVDNGEKFEFSGLRLDWFRLQAYTSVAKAPLHLHENPDLAKVMNLIVFHSRMLDSVEKLLVETSDLSTFCFHLRIFEKMFAMTLEESAMLRYAIAFPLICAHFVHCTHEMCPEEYPHLKNHGLHHCNSFLEELAKQTSNCVLEICAEQRNLSEQLLPKHCATTISKAKNKKTRKQRQTPRKGEPERDKPGAESHRKNRSIVTNMDKLHLNLTELALTMNHVYSFSVFEHTIFPSEYLSSHLEARLNRAIVWLAGYNATTQEIVRPSELLAGVKAYIGFIQSLAQFLGADASRVIRNALLQQTQPLDSCGEQTITTLYTNWYLESLLRQASSGTIILSPAMQAFVSLPREGEQNFSAEEFSDISEMRALAELLGPYGMKFLSENLMWHVTSQIVELKKLVVENMDILVQIRSNFSKPDLMASLLPQLTGAENVLKRMTIIGVILSFRAMAQEGLREVFSSHCPFLMGPIECLKEFVTPDTDIKVTLSIFELASAAGVGCDIDPALVAAIANLKADTSSPEEEYKVACLLLIFLAVSLPLLATDPSSFYSIEKDGYNNNIHCLTKAIIQVSAALFTLYNKNIETHLKEFLVVASVSLLQLGQETDKLKTRNRESISLLMRLVVEESSFLTLDMLESCFPYVLLRNAYREVSRAFHLN.

The segment at Lys-638–Arg-670 is disordered. Positions Ala-639–Pro-651 are enriched in basic residues. The span at Arg-652 to His-666 shows a compositional bias: basic and acidic residues. Residues Val-996–Ser-1016 traverse the membrane as a helical segment.

This sequence belongs to the HEM-1/HEM-2 family. In hematopoietic cells, component of the WAVE2 complex composed of ABI1, CYFIP1/SRA1, NCKAP1L/HEM1 and WASF2/WAVE2. Interacts with ARHGAP4, PIK3C3/VPS34 and PPP1R12A/MYPT1. Interacts with mammalian target of rapamycin complex 2 (mTORC2) components, including MTOR and RICTOR. Expressed only in cells of hematopoietic origin. Expressed in neutrophils (at protein level). Expressed in T-cells (at protein level).

The protein localises to the cell membrane. It is found in the cytoplasm. Its function is as follows. Essential hematopoietic-specific regulator of the actin cytoskeleton. Controls lymphocyte development, activation, proliferation and homeostasis, erythrocyte membrane stability, as well as phagocytosis and migration by neutrophils and macrophages. Component of the WAVE2 complex which signals downstream of RAC to stimulate F-actin polymerization. Required for stabilization and/or translation of the WAVE2 complex proteins in hematopoietic cells. Within the WAVE2 complex, enables the cortical actin network to restrain excessive degranulation and granule release by T-cells. Required for efficient T-lymphocyte and neutrophil migration. Exhibits complex cycles of activation and inhibition to generate waves of propagating the assembly with actin. Also involved in mechanisms WAVE-independent to regulate myosin and actin polymerization during neutrophil chemotaxis. In T-cells, required for proper mechanistic target of rapamycin complex 2 (mTORC2)-dependent AKT phosphorylation, cell proliferation and cytokine secretion, including that of IL2 and TNF. In Homo sapiens (Human), this protein is Nck-associated protein 1-like.